A 601-amino-acid polypeptide reads, in one-letter code: Elongation factor 4 (601 aa).

Residues 7-189 (DTIRNFSIVA…AIVAKLPPPK (183 aa)) enclose the tr-type G domain. GTP-binding positions include 19 to 24 (DHGKST) and 136 to 139 (NKID).

It belongs to the TRAFAC class translation factor GTPase superfamily. Classic translation factor GTPase family. LepA subfamily.

The protein localises to the cell inner membrane. It catalyses the reaction GTP + H2O = GDP + phosphate + H(+). Required for accurate and efficient protein synthesis under certain stress conditions. May act as a fidelity factor of the translation reaction, by catalyzing a one-codon backward translocation of tRNAs on improperly translocated ribosomes. Back-translocation proceeds from a post-translocation (POST) complex to a pre-translocation (PRE) complex, thus giving elongation factor G a second chance to translocate the tRNAs correctly. Binds to ribosomes in a GTP-dependent manner. The polypeptide is Elongation factor 4 (Methylobacterium nodulans (strain LMG 21967 / CNCM I-2342 / ORS 2060)).